The following is a 511-amino-acid chain: Aminotransferase FGSG_17085 (511 aa).

Residue 165–166 (GA) coordinates pyridoxal 5'-phosphate. Substrate is bound at residue Y200. D310 contacts pyridoxal 5'-phosphate. An N6-(pyridoxal phosphate)lysine modification is found at K339. G371 provides a ligand contact to substrate. 372 to 373 (HT) lines the pyridoxal 5'-phosphate pocket.

This sequence belongs to the class-III pyridoxal-phosphate-dependent aminotransferase family. The cofactor is pyridoxal 5'-phosphate.

It functions in the pathway secondary metabolite biosynthesis. Aminotransferase; part of the gene cluster that mediates the biosynthesis of the lipopeptide fusaristatin A. Fusaristatin A consists of a polyketide chain linked to three amino acid residues glutamine (Gln), dehydroalanine (dehydro-Ala), and beta-aminoisobutyric acid. The biosynthesis starts with formation of a linear polyketide chain by the highly reducing polyketide synthase PKS6. The gene cluster does not contain an acyl-CoA ligase or an acyl-transferase, and it is therefore predicted that the polyketide is transferred directly to the nonribosomal peptide synthetase NRPS7. Modules 1-3 from NRPS7 incorporate dehydro-Ala, Gln, and beta-aminoisobutyric acid in the compound, which is released by cyclization. The beta-aminoisobutyric acid units are most likely not freely available to the NRPS, but can be synthesized from thymine, which requires a dehydrogenase, a monooxygenase, and an aminotransferase. The fusaristatin A cluster contains a cytochrome P450 monooxygenase (FGSG_08207) and an aminotransferase (FGSG_17085), which theoretically can perform two of the enzymatic steps. The enzymes may however also be involved in biosynthesis of dehydroalanine or modification of the polyketide. The dehydro-Ala residue can be a result of cyclization, where serine is dehydrated. The last gene of the cluster encodes a protein with an A/B barrel domain found in variable enzymes, which hampers functional prediction. In Gibberella zeae (strain ATCC MYA-4620 / CBS 123657 / FGSC 9075 / NRRL 31084 / PH-1) (Wheat head blight fungus), this protein is Aminotransferase FGSG_17085.